We begin with the raw amino-acid sequence, 485 residues long: MFTLRSLAILAVFAATALASKQSSNDRELVVAIYGGGLASATLAQALKGSSNLNVQYFDPALDLTPTSFRLFGFDPKVHDALALVNEEAGGAIERSGWYPEEPSVVVVGQGSDADTVVLDWAQLKNTTHHPQVTVVDPKPFLQQMLNGTDESRLHPNKTLVSITRKDLSAKYPLELKFQDGSIQHADVLIGDDGPFGQMRSEVLGAKHPANAPVFMNFLSAVAHVAPDDAEKLLGQKYGNRDLGRRFERVGMGSWFLNAYLEGFSTCLGSFYTEEAYDLSQFTRTTSVKELTARFSNLNEADNSQKILSGYSGLRLIPEIEHSPAPTYINGLVAMQGNAAHFMTNFQQLGPSQQIEDAMILGTLLRSAHSRADVEAALYAYDTVRRPRSQWVSEHGKRLGWLWTGMVEDVGIDAKKLKKAMLQWKQDSEAFDLKAHKNEAVKIMKQTIKERSGSEKIITQEEKIKAGFQGLWEAMREKSGEQVEL.

A signal peptide spans 1 to 19; sequence MFTLRSLAILAVFAATALA. 2 residues coordinate FAD: Asp59 and Gly73. N-linked (GlcNAc...) asparagine glycans are attached at residues Asn126, Asn147, and Asn157.

Belongs to the paxM FAD-dependent monooxygenase family. FAD serves as cofactor.

It participates in secondary metabolite biosynthesis. Its function is as follows. FAD-dependent monooxygenase; part of the gene cluster that mediates the biosynthesis of elsinochrome C, a perelyenequinone phytotoxin structurally similar to cercosporin. The first step of elsinochrome C biosynthesis is performed by the polyketide synthase elcA which catalyzes the formation of nor-toralactone. The starter unit acyltransferase (SAT) domain of elcA initiates polyketide extension by the selective utilization of acetyl-CoA, which is elongated to the heptaketide in the beta-ketoacyl synthase (KS) domain by successive condensations with six malonyl units introduced by the malonyl acyltransferase (MAT) domain. The product template (PT) domain catalyzes C4-C9 and C2-C11 aldol cyclizations and dehydrations to a trihydroxynaphthalene, which is thought to be delivered to the thioesterase (TE) domain for product release. The bifunctional enzyme elcB then methylates nor-toralactone to toralactone before conducting an unusual oxidative aromatic ring opening. The next step in perylenequinone biosynthesis is an O-methylation at the nascent OH-6 of the elcB product performed by the O-methyltransferase elcD. The oxidative coupling of the two monomeric naphthol units in perylenequinone biosynthesis is catalyzed by the FAD-dependent monooxygenase elcE and the multicopper oxidase elcG. ElcG might catalyze the first intermolecular coupling in a regio- and stereo-selective manner via a phenol radical coupling mechanism and the elcE could forge the second C-C bond intramolecularly via a hydride transfer mechanism. The fasciclin domain-containing protein elcF might also play a role duting this step. The last piece of the puzzle in the biosynthesis of elsinochrome C is the additional annulation by enolate coupling to afford the dihydrobenzo(ghi)perylenequinone system, catalyzed by the FAD-dependent monooxygenase elcH. The chain is FAD-dependent monooxygenase elcH from Phaeosphaeria nodorum (strain SN15 / ATCC MYA-4574 / FGSC 10173) (Glume blotch fungus).